The chain runs to 215 residues: Programmed cell death protein 10 homolog (215 aa).

Belongs to the PDCD10 family. As to quaternary structure, interacts with gck-1. In terms of tissue distribution, expressed in pharynx, intestine, germline, vulva and excretory canals.

It localises to the cytoplasm. The protein resides in the apical cell membrane. In terms of biological role, involved in excretory canal elongation during postembryonic development. Plays a role in promoting Golgi stability, ER integrity and vesicle transport probably by regulating the activation of Rho GTPase cdc-42. Involved in fertility. This is Programmed cell death protein 10 homolog from Caenorhabditis elegans.